We begin with the raw amino-acid sequence, 214 residues long: MDLHFENIRREYDKRSLSASDLTPTPFDLVTRWLQDAVEAKTYEPTAVIVGTATPDGHPSTRTVLLKEFLNNEFIFYSNYESRKGQQMAANPHVCLTFLWHELERQIHVEGDVRILEPELSDAYFATRPYKSRVGARISPQSRPIPGRSFIVQEFMKESLKYAGRTVPRPDTWGGFAVKPVRIEFWQGRESRLHDRFLYELRPDASWSVHRLAP.

Residues 9 to 12 (RREY) and Lys-67 contribute to the substrate site. Residues 62-67 (RTVLLK), 77-78 (YS), Arg-83, Lys-84, and Gln-106 each bind FMN. The substrate site is built by Tyr-124, Arg-128, and Ser-132. FMN contacts are provided by residues 141-142 (QS) and Trp-186. 192–194 (RLH) provides a ligand contact to substrate. Residue Arg-196 coordinates FMN.

It belongs to the pyridoxamine 5'-phosphate oxidase family. In terms of assembly, homodimer. It depends on FMN as a cofactor.

It catalyses the reaction pyridoxamine 5'-phosphate + O2 + H2O = pyridoxal 5'-phosphate + H2O2 + NH4(+). The enzyme catalyses pyridoxine 5'-phosphate + O2 = pyridoxal 5'-phosphate + H2O2. It participates in cofactor metabolism; pyridoxal 5'-phosphate salvage; pyridoxal 5'-phosphate from pyridoxamine 5'-phosphate: step 1/1. Its pathway is cofactor metabolism; pyridoxal 5'-phosphate salvage; pyridoxal 5'-phosphate from pyridoxine 5'-phosphate: step 1/1. Functionally, catalyzes the oxidation of either pyridoxine 5'-phosphate (PNP) or pyridoxamine 5'-phosphate (PMP) into pyridoxal 5'-phosphate (PLP). In Porphyromonas gingivalis (strain ATCC 33277 / DSM 20709 / CIP 103683 / JCM 12257 / NCTC 11834 / 2561), this protein is Pyridoxine/pyridoxamine 5'-phosphate oxidase.